The primary structure comprises 105 residues: Small ribosomal subunit protein uS10 (105 aa).

It belongs to the universal ribosomal protein uS10 family. Part of the 30S ribosomal subunit.

Involved in the binding of tRNA to the ribosomes. The chain is Small ribosomal subunit protein uS10 from Anaplasma marginale (strain Florida).